The following is a 210-amino-acid chain: Cytochrome c oxidase subunit 2 (210 aa).

Topologically, residues 1–15 (MSFILTFWMIFLMDS) are mitochondrial intermembrane. Residues 16 to 36 (IIVLISFSIFLSVWICALIIA) form a helical membrane-spanning segment. At 37–63 (TVLTVTKINNIYCTWDFISSKFIDTYW) the chain is on the mitochondrial matrix side. The chain crosses the membrane as a helical span at residues 64–84 (FVLGMMFILCLLLRLCLLLYF). The Mitochondrial intermembrane segment spans residues 85–210 (SCINFVSFDL…GFMPIVINFI (126 aa)). His157, Cys192, Glu194, Cys196, His200, and Met203 together coordinate Cu cation. Mg(2+) is bound at residue Glu194.

It belongs to the cytochrome c oxidase subunit 2 family. In terms of assembly, component of the cytochrome c oxidase (complex IV, CIV), a multisubunit enzyme composed of a catalytic core of 3 subunits and several supernumerary subunits. The complex exists as a monomer or a dimer and forms supercomplexes (SCs) in the inner mitochondrial membrane with ubiquinol-cytochrome c oxidoreductase (cytochrome b-c1 complex, complex III, CIII). The cofactor is Cu cation.

It is found in the mitochondrion inner membrane. It carries out the reaction 4 Fe(II)-[cytochrome c] + O2 + 8 H(+)(in) = 4 Fe(III)-[cytochrome c] + 2 H2O + 4 H(+)(out). Component of the cytochrome c oxidase, the last enzyme in the mitochondrial electron transport chain which drives oxidative phosphorylation. The respiratory chain contains 3 multisubunit complexes succinate dehydrogenase (complex II, CII), ubiquinol-cytochrome c oxidoreductase (cytochrome b-c1 complex, complex III, CIII) and cytochrome c oxidase (complex IV, CIV), that cooperate to transfer electrons derived from NADH and succinate to molecular oxygen, creating an electrochemical gradient over the inner membrane that drives transmembrane transport and the ATP synthase. Cytochrome c oxidase is the component of the respiratory chain that catalyzes the reduction of oxygen to water. Electrons originating from reduced cytochrome c in the intermembrane space (IMS) are transferred via the dinuclear copper A center (CU(A)) of subunit 2 and heme A of subunit 1 to the active site in subunit 1, a binuclear center (BNC) formed by heme A3 and copper B (CU(B)). The BNC reduces molecular oxygen to 2 water molecules using 4 electrons from cytochrome c in the IMS and 4 protons from the mitochondrial matrix. The polypeptide is Cytochrome c oxidase subunit 2 (COXII) (Trypanosoma brucei brucei).